Consider the following 245-residue polypeptide: Tetraspanin-16 (245 aa).

At 1–13 (MAEIHTPYSSLKK) the chain is on the cytoplasmic side. A helical transmembrane segment spans residues 14–34 (LLSLLNGFVAVSGIILVGLGI). The Extracellular segment spans residues 35–37 (GGK). Residues 38 to 58 (CGGASLTNVLGLSSAYLLHVG) traverse the membrane as a helical segment. Asn-59 is a topological domain (cytoplasmic). A helical transmembrane segment spans residues 60 to 80 (LCLVMGCITVLLGCAGWYGAT). Residues 81 to 94 (KESRGTLLFCILSM) are Extracellular-facing. The chain crosses the membrane as a helical span at residues 95-115 (VIVLIMEVTAATVVLLFFPIV). The Cytoplasmic segment spans residues 116-245 (GDVALEHTFV…VAQAGLELLA (130 aa)).

Belongs to the tetraspanin (TM4SF) family. As to expression, broadly expressed in most human tissues and cell lines including neural and bone marrow derived tissues.

The protein resides in the membrane. In Homo sapiens (Human), this protein is Tetraspanin-16 (TSPAN16).